Here is a 268-residue protein sequence, read N- to C-terminus: Tryptophan synthase alpha chain (268 aa).

Catalysis depends on proton acceptor residues Glu49 and Asp60.

Belongs to the TrpA family. Tetramer of two alpha and two beta chains.

The catalysed reaction is (1S,2R)-1-C-(indol-3-yl)glycerol 3-phosphate + L-serine = D-glyceraldehyde 3-phosphate + L-tryptophan + H2O. The protein operates within amino-acid biosynthesis; L-tryptophan biosynthesis; L-tryptophan from chorismate: step 5/5. The alpha subunit is responsible for the aldol cleavage of indoleglycerol phosphate to indole and glyceraldehyde 3-phosphate. The chain is Tryptophan synthase alpha chain from Haemophilus influenzae (strain PittEE).